Here is an 884-residue protein sequence, read N- to C-terminus: Kinesin-like protein KIN-7C (884 aa).

Residues 33 to 355 (RIQVLVRLRP…LLFGSCAKEV (323 aa)) form the Kinesin motor domain. 119-126 (GQTSSGKT) is an ATP binding site. The stretch at 364–435 (VMSDKALVKH…LQDLLQSVGD (72 aa)) forms a coiled coil. The tract at residues 434 to 530 (GDHDLNRQVQ…VNSRHSRPSG (97 aa)) is disordered. The segment covering 449-460 (RSPPSVGMPPSV) has biased composition (low complexity). A compositionally biased stretch (basic and acidic residues) spans 461–483 (SRDDSSQVSHDDSDLYKEVRCIE). Polar residues predominate over residues 498-523 (GESSSPQDSNMNSGLHGNDSNASVNS).

Belongs to the TRAFAC class myosin-kinesin ATPase superfamily. Kinesin family. KIN-7 subfamily.

The sequence is that of Kinesin-like protein KIN-7C from Oryza sativa subsp. japonica (Rice).